Consider the following 172-residue polypeptide: Crossover junction endodeoxyribonuclease RuvC (172 aa).

Catalysis depends on residues Asp-11, Glu-71, and Asp-143. Residues Asp-11, Glu-71, and Asp-143 each contribute to the Mg(2+) site.

It belongs to the RuvC family. Homodimer which binds Holliday junction (HJ) DNA. The HJ becomes 2-fold symmetrical on binding to RuvC with unstacked arms; it has a different conformation from HJ DNA in complex with RuvA. In the full resolvosome a probable DNA-RuvA(4)-RuvB(12)-RuvC(2) complex forms which resolves the HJ. Mg(2+) is required as a cofactor.

It is found in the cytoplasm. The enzyme catalyses Endonucleolytic cleavage at a junction such as a reciprocal single-stranded crossover between two homologous DNA duplexes (Holliday junction).. Its function is as follows. The RuvA-RuvB-RuvC complex processes Holliday junction (HJ) DNA during genetic recombination and DNA repair. Endonuclease that resolves HJ intermediates. Cleaves cruciform DNA by making single-stranded nicks across the HJ at symmetrical positions within the homologous arms, yielding a 5'-phosphate and a 3'-hydroxyl group; requires a central core of homology in the junction. The consensus cleavage sequence is 5'-(A/T)TT(C/G)-3'. Cleavage occurs on the 3'-side of the TT dinucleotide at the point of strand exchange. HJ branch migration catalyzed by RuvA-RuvB allows RuvC to scan DNA until it finds its consensus sequence, where it cleaves and resolves the cruciform DNA. This chain is Crossover junction endodeoxyribonuclease RuvC, found in Brucella anthropi (strain ATCC 49188 / DSM 6882 / CCUG 24695 / JCM 21032 / LMG 3331 / NBRC 15819 / NCTC 12168 / Alc 37) (Ochrobactrum anthropi).